The sequence spans 151 residues: Ribosome maturation factor RimP (151 aa).

The protein belongs to the RimP family.

Its subcellular location is the cytoplasm. Required for maturation of 30S ribosomal subunits. This chain is Ribosome maturation factor RimP, found in Shewanella baltica (strain OS223).